The sequence spans 152 residues: UPF0178 protein SAB0630c (152 aa).

This sequence belongs to the UPF0178 family.

This is UPF0178 protein SAB0630c from Staphylococcus aureus (strain bovine RF122 / ET3-1).